The sequence spans 548 residues: Phenylalanine--tRNA ligase beta subunit (548 aa).

Residues 275–350 form the B5 domain; sequence LKEDVLETTS…IAYGYNKFSG (76 aa). Mg(2+) is bound by residues aspartate 328, aspartate 334, glutamate 337, and glutamate 338.

Belongs to the phenylalanyl-tRNA synthetase beta subunit family. Type 2 subfamily. In terms of assembly, tetramer of two alpha and two beta subunits. Mg(2+) serves as cofactor.

The protein localises to the cytoplasm. The catalysed reaction is tRNA(Phe) + L-phenylalanine + ATP = L-phenylalanyl-tRNA(Phe) + AMP + diphosphate + H(+). The protein is Phenylalanine--tRNA ligase beta subunit of Methanocaldococcus jannaschii (strain ATCC 43067 / DSM 2661 / JAL-1 / JCM 10045 / NBRC 100440) (Methanococcus jannaschii).